The following is a 417-amino-acid chain: Spermidine/putrescine import ATP-binding protein PotA (417 aa).

The ABC transporter domain occupies 5–308 (IILKDLTKVF…PANRFVAQFV (304 aa)). 37–44 (GPSGCGKT) is a binding site for ATP. The interval 105-177 (DFNSKIKDNL…TALKCKKINK (73 aa)) is insert.

This sequence belongs to the ABC transporter superfamily. Spermidine/putrescine importer (TC 3.A.1.11.1) family. The complex is composed of two ATP-binding proteins (PotA), two transmembrane proteins (PotB and PotC) and a solute-binding protein (PotD).

It is found in the cell membrane. The enzyme catalyses ATP + H2O + polyamine-[polyamine-binding protein]Side 1 = ADP + phosphate + polyamineSide 2 + [polyamine-binding protein]Side 1.. In terms of biological role, part of the ABC transporter complex PotABCD involved in spermidine/putrescine import. Responsible for energy coupling to the transport system. The chain is Spermidine/putrescine import ATP-binding protein PotA from Aster yellows witches'-broom phytoplasma (strain AYWB).